A 192-amino-acid polypeptide reads, in one-letter code: NADH-quinone oxidoreductase subunit C (192 aa).

The interval 170-192 (LGGIPVEYKGATVPPPDERRQYA) is disordered.

This sequence belongs to the complex I 30 kDa subunit family. In terms of assembly, NDH-1 is composed of 14 different subunits. Subunits NuoB, C, D, E, F, and G constitute the peripheral sector of the complex.

It is found in the cell membrane. It carries out the reaction a quinone + NADH + 5 H(+)(in) = a quinol + NAD(+) + 4 H(+)(out). Functionally, NDH-1 shuttles electrons from NADH, via FMN and iron-sulfur (Fe-S) centers, to quinones in the respiratory chain. The immediate electron acceptor for the enzyme in this species is believed to be a menaquinone. Couples the redox reaction to proton translocation (for every two electrons transferred, four hydrogen ions are translocated across the cytoplasmic membrane), and thus conserves the redox energy in a proton gradient. This Acidothermus cellulolyticus (strain ATCC 43068 / DSM 8971 / 11B) protein is NADH-quinone oxidoreductase subunit C.